Here is a 489-residue protein sequence, read N- to C-terminus: Glutamyl-tRNA(Gln) amidotransferase subunit A (489 aa).

Active-site charge relay system residues include Lys77 and Ser157. The active-site Acyl-ester intermediate is the Ser181.

Belongs to the amidase family. GatA subfamily. As to quaternary structure, heterotrimer of A, B and C subunits.

The enzyme catalyses L-glutamyl-tRNA(Gln) + L-glutamine + ATP + H2O = L-glutaminyl-tRNA(Gln) + L-glutamate + ADP + phosphate + H(+). Functionally, allows the formation of correctly charged Gln-tRNA(Gln) through the transamidation of misacylated Glu-tRNA(Gln) in organisms which lack glutaminyl-tRNA synthetase. The reaction takes place in the presence of glutamine and ATP through an activated gamma-phospho-Glu-tRNA(Gln). The chain is Glutamyl-tRNA(Gln) amidotransferase subunit A from Caulobacter vibrioides (strain ATCC 19089 / CIP 103742 / CB 15) (Caulobacter crescentus).